The following is a 281-amino-acid chain: 2-dehydro-3-deoxyphosphooctonate aldolase (281 aa).

This sequence belongs to the KdsA family.

The protein localises to the cytoplasm. It catalyses the reaction D-arabinose 5-phosphate + phosphoenolpyruvate + H2O = 3-deoxy-alpha-D-manno-2-octulosonate-8-phosphate + phosphate. It functions in the pathway carbohydrate biosynthesis; 3-deoxy-D-manno-octulosonate biosynthesis; 3-deoxy-D-manno-octulosonate from D-ribulose 5-phosphate: step 2/3. The protein operates within bacterial outer membrane biogenesis; lipopolysaccharide biosynthesis. This is 2-dehydro-3-deoxyphosphooctonate aldolase from Pseudomonas savastanoi pv. phaseolicola (strain 1448A / Race 6) (Pseudomonas syringae pv. phaseolicola (strain 1448A / Race 6)).